The chain runs to 423 residues: Serine--tRNA ligase (423 aa).

230-232 (TSE) contributes to the L-serine binding site. 261-263 (RSE) lines the ATP pocket. L-serine is bound at residue Glu284. Residue 348-351 (EISS) coordinates ATP. Ser384 contacts L-serine.

It belongs to the class-II aminoacyl-tRNA synthetase family. Type-1 seryl-tRNA synthetase subfamily. In terms of assembly, homodimer. The tRNA molecule binds across the dimer.

The protein localises to the cytoplasm. It catalyses the reaction tRNA(Ser) + L-serine + ATP = L-seryl-tRNA(Ser) + AMP + diphosphate + H(+). It carries out the reaction tRNA(Sec) + L-serine + ATP = L-seryl-tRNA(Sec) + AMP + diphosphate + H(+). It functions in the pathway aminoacyl-tRNA biosynthesis; selenocysteinyl-tRNA(Sec) biosynthesis; L-seryl-tRNA(Sec) from L-serine and tRNA(Sec): step 1/1. Functionally, catalyzes the attachment of serine to tRNA(Ser). Is also able to aminoacylate tRNA(Sec) with serine, to form the misacylated tRNA L-seryl-tRNA(Sec), which will be further converted into selenocysteinyl-tRNA(Sec). The polypeptide is Serine--tRNA ligase (Macrococcus caseolyticus (strain JCSC5402) (Macrococcoides caseolyticum)).